Consider the following 623-residue polypeptide: Procollagen galactosyltransferase 1 (623 aa).

Positions 1–30 (MAAAPRACKGHGRPLPVLLLLLLLALPPLG) are cleaved as a signal peptide. 3 N-linked (GlcNAc...) asparagine glycosylation sites follow: asparagine 97, asparagine 185, and asparagine 382. The segment covering 589–607 (RAKSQKMREQQALSREAKN) has biased composition (basic and acidic residues). Residues 589 to 623 (RAKSQKMREQQALSREAKNSDVLQSPLDSAARDEL) are disordered. The Prevents secretion from ER motif lies at 620 to 623 (RDEL).

This sequence belongs to the glycosyltransferase 25 family. In terms of processing, N-glycosylated.

It is found in the endoplasmic reticulum lumen. It carries out the reaction (5R)-5-hydroxy-L-lysyl-[collagen] + UDP-alpha-D-galactose = (5R)-5-O-(beta-D-galactosyl)-5-hydroxy-L-lysyl-[collagen] + UDP + H(+). Beta-galactosyltransferase that transfers beta-galactose to hydroxylysine residues of type I collagen. By acting on collagen glycosylation, facilitates the formation of collagen triple helix. Also involved in the biosynthesis of collagen type IV. The chain is Procollagen galactosyltransferase 1 (COLGALT1) from Bos taurus (Bovine).